Reading from the N-terminus, the 344-residue chain is ESARNPTIYPLTLPPALSSDPVIIGCLIHDYFPSGTMNVTWGKSGKDITTVNFPPALASGGRYTMSNQLTLPAVECPEGESVKCSVQHDSNPVQELDVNCSGPTPPPPITIPSCQPSLSLQRPALEDLLLGSDASITCTLNGLRNPEGAVFTWEPSTGKDAVQKKAVQNSCGCYSVSSVLPGCAERWNSGASFKCTVTHPESGTLTGTIAKVTVNTFPPQVHLLPPPSEELALNELLSLTCLVRAFNPKEVLVRWLHGNEELSPESYLVFEPLKEPGEGATTYLVTSVLRVSAETWKQGDQYSCMVGHEALPMNFTQKTIDRLSGKPTNVSVSVIMSEGDGICY.

The Ig-like 1 domain occupies Pro6–Asn99. 2 disulfides stabilise this stretch: Cys26-Cys84 and Cys76-Cys100. N-linked (GlcNAc...) asparagine glycosylation is found at Asn38 and Asn99. A glycan (O-linked (GalNAc) serine; in variant MOPC 47A) is linked at Ser101. Intrachain disulfides connect Cys114–Cys171 and Cys138–Cys195. Ig-like domains lie at Pro116 to Thr206 and Pro219 to Asp321. A glycan (N-linked (GlcNAc...) asparagine) is linked at Asn329. N-linked (GlcNAc...) asparagine; in variant M511 glycosylation is present at Ser331.

Functionally, ig alpha is the major immunoglobulin class in body secretions. It may serve both to defend against local infection and to prevent access of foreign antigens to the general immunologic system. The sequence is that of Ig alpha chain C region from Mus musculus (Mouse).